We begin with the raw amino-acid sequence, 103 residues long: Small ribosomal subunit protein uS10 (103 aa).

The protein belongs to the universal ribosomal protein uS10 family. Part of the 30S ribosomal subunit.

Its function is as follows. Involved in the binding of tRNA to the ribosomes. This Rubrobacter xylanophilus (strain DSM 9941 / JCM 11954 / NBRC 16129 / PRD-1) protein is Small ribosomal subunit protein uS10.